The sequence spans 628 residues: MSNNQQTLGFQTEVKQLLQLMIHSLYSNKEIFLRELISNASDAADKLRFKALSAPELYEGDGDLKVRIRFDEKKGTLTVSDNGIGMTREQATEHLGTIAKSGTKEFLTALGQDQAKDSQLIGQFGVGFYSAFIVADKVEVRSRAAGVPAEQGVLWTSAGEGEYSVEDIEKKERGTEITLFLREDEKEFLNEWRLREIIGKYSDHIGLPVEILTKEFDEEGKESDVKWEKINKAQALWTRAKGEISDEEYQEFYKHISHDFADPLVWQHNKVEGNQEYTSLLYVPSKAPWDLFNREQKHGLKLYVQRVFIMDDAEVFMPNYLRFMRGLLDSNDLPLNVSREILQDNKTTAALRKALTKRSLQMLEKLAKDEAEKYATFWKEFGLVLKEGVGEDFANREQIAKLFRFASTHTDSSEQSVSLADYIARMKEGQKAVYYITADSYVAAKNSPHLELFNKKGIEVLLLSDRIDEWMLSYLTEFDGKPLQSITKADLDLGDLADKTEAEKEKAQDEALSGFIERVKTLLGERVKDVRLTHRLTDTPAVVSTDNDQMTTQMAKLFAMSGQPVPEVKYTFELNPDHALVKKTAALTDESAFADWVELLLEQAMLSERGTLENPTAFIKRVNTLLAG.

Residues 1–339 form an a; substrate-binding region; sequence MSNNQQTLGF…SNDLPLNVSR (339 aa). The segment at 340-556 is b; that stretch reads EILQDNKTTA…NDQMTTQMAK (217 aa). The c stretch occupies residues 557–628; sequence LFAMSGQPVP…IKRVNTLLAG (72 aa).

It belongs to the heat shock protein 90 family. In terms of assembly, homodimer.

The protein resides in the cytoplasm. In terms of biological role, molecular chaperone. Has ATPase activity. The chain is Chaperone protein HtpG from Actinobacillus succinogenes (strain ATCC 55618 / DSM 22257 / CCUG 43843 / 130Z).